A 300-amino-acid chain; its full sequence is Protein Bel-1 (300 aa).

The disordered stretch occupies residues Met1 to Arg50. Over residues Val10 to Ser23 the composition is skewed to polar residues. A DNA-binding region spans residues Ser89–His200. Residues Phe209–Leu244 are disordered. Basic residues predominate over residues Lys211–Arg222. The Nuclear localization signal signature appears at Lys214–Arg223. A transactivation domain region spans residues Ser224 to Leu300. Residues Asn227 to Met237 show a composition bias toward polar residues.

As to quaternary structure, homodimer or homomultimer. Forms complexes with the host nuclear factors NFIA, NFIB, NFIC or NFIX.

It localises to the host nucleus. Its function is as follows. Transcriptional transactivator that activates the viral internal promoter (IP), thereby enhancing its own expression. This transactivation is repressed by nuclear factor I. Also transactivates the long terminal repeat (LTR) promoter, thereby inducing structural gene expression, initiating the late phase of infection. It is therefore a key regulator of viral gene expression. It directly binds to and activates DNA target sites of viral promoters and those of distinct cellular genes. Required for viral replication. The sequence is that of Protein Bel-1 (bel1) from Human spumaretrovirus (SFVcpz(hu)).